Reading from the N-terminus, the 304-residue chain is E3 ubiquitin-protein ligase RNF115 (304 aa).

A2 bears the N-acetylalanine mark. The disordered stretch occupies residues 95 to 138; the sequence is PLDQDNRANERGHQTHTDFWGARPPRLPLGRRYRSRGSSRPDRS. Over residues 98 to 110 the composition is skewed to basic and acidic residues; sequence QDNRANERGHQTH. Phosphoserine; by PKB/AKT1 is present on residues S132 and S133. The segment at 228–269 adopts an RING-type zinc-finger fold; sequence CPVCKEDYTVEEEVRQLPCNHFFHSSCIVPWLELHDTCPVCR. The tract at residues 272–304 is disordered; that stretch reads LNGEDSTRQSQSTEASASNRFSNDSQLHDRWTF. Polar residues predominate over residues 279–296; that stretch reads RQSQSTEASASNRFSNDS.

In terms of assembly, interacts with RAB7A. Interacts with EGFR and FLT3. Interacts with BST2. Interacts with STX17. Interacts with YWHAE. In terms of processing, phosphorylated by AKT1, allowing association with the 14-3-3 chaperones that facilitates associating with TLRs. Post-translationally, RING-type zinc finger-dependent and E2-dependent autoubiquitination. Deubiquitinated by USP9X; antogonizing its autoubiquitination and subsequent proteasomal degradation. In terms of tissue distribution, expressed at extremely low levels in normal breast, prostate, lung, colon. Higher levels of expression are detected in heart, skeletal muscle, testis as well as in breast and prostate cancer cells.

The protein resides in the cytoplasm. It is found in the nucleus. It localises to the endoplasmic reticulum. The protein localises to the golgi apparatus. The enzyme catalyses S-ubiquitinyl-[E2 ubiquitin-conjugating enzyme]-L-cysteine + [acceptor protein]-L-lysine = [E2 ubiquitin-conjugating enzyme]-L-cysteine + N(6)-ubiquitinyl-[acceptor protein]-L-lysine.. Its pathway is protein modification; protein ubiquitination. Its function is as follows. E3 ubiquitin-protein ligase that catalyzes the 'Lys-48'- and/or 'Lys-63'-linked polyubiquitination of various substrates and thereby plays a role in a number of signaling pathways including autophagy, innate immunity, cell proliferation and cell death. Plays a role in the endosomal trafficking and degradation of membrane receptors including EGFR, FLT3, MET and CXCR4 through their polyubiquitination. Participates together with BST2 in antiviral immunity by facilitating the internalization of HIV-1 virions into intracellular vesicles leading to their lysosomal degradation. Also possesses an antiviral activity independently of BST2 by promoting retroviral GAG proteins ubiquitination, redistribution to endo-lysosomal compartments and, ultimately, lysosomal degradation. Catalyzes distinct types of ubiquitination on MAVS and STING1 at different phases of viral infection to promote innate antiviral response. Mediates the 'Lys-48'-linked ubiquitination of MAVS leading to its proteasomal degradation and ubiquitinates STING1 via 'Lys-63'-linked polyubiquitination, critical for its oligomerization and the subsequent recruitment of TBK1. Plays a positive role in the autophagosome-lysosome fusion by interacting with STX17 and enhancing its stability without affecting 'Lys-48'- or 'Lys-63'-linked polyubiquitination levels, which in turn promotes autophagosome maturation. Negatively regulates TLR-induced expression of proinflammatory cytokines by catalyzing 'Lys-11'-linked ubiquitination of RAB1A and RAB13 to inhibit post-ER trafficking of TLRs to the Golgi by RAB1A and subsequently from the Golgi apparatus to the cell surface by RAB13. This chain is E3 ubiquitin-protein ligase RNF115, found in Homo sapiens (Human).